Reading from the N-terminus, the 337-residue chain is Major envelope glycoprotein (337 aa).

Residues Asn76, Asn114, Asn271, and Asn301 are each glycosylated (N-linked (GlcNAc...) asparagine; by host).

Belongs to the baculoviridae gp64 family. In terms of processing, palmitoylated.

It is found in the virion membrane. The protein resides in the host cell membrane. Functionally, envelope phosphoglycoprotein which mediates the fusion of viral and host endosomal membranes leading to virus entry into the host cell. The protein is Major envelope glycoprotein (GP67) of Lepidoptera (butterflies and moths).